Reading from the N-terminus, the 524-residue chain is Ribonuclease Y (524 aa).

Residues 2–22 (GIVINLFLIIAASIVFFVVGF) form a helical membrane-spanning segment. One can recognise a KH domain in the interval 214 to 299 (ALSVVHIQSD…KAYQDAKKEI (86 aa)). Residues 340–432 (LLQHSREVAM…VDAANIVSLS (93 aa)) enclose the HD domain.

It belongs to the RNase Y family.

It is found in the cell membrane. Endoribonuclease that initiates mRNA decay. The protein is Ribonuclease Y of Chlorobaculum tepidum (strain ATCC 49652 / DSM 12025 / NBRC 103806 / TLS) (Chlorobium tepidum).